A 560-amino-acid chain; its full sequence is MRSDTIKKGFEKAPHRSLLKATGCVSTRDDFSKPFIGICNSFNELIPGHAHLQELGRIAKEAVREAGGVPFEFNTIGVCDGIAMGHVGMRYSLASRELIADSVETVVEAHRLDGLVCIPNCDKITPGMMMGALRTNVPVVFVSGGPMKAGHTPSGKTVDLISVFEAVGKCSTGEITEDELQTVEECGCPGCGSCSGMFTANSMNCLCEALGFALPGNGTILAADPRRNELVKAAAGRIIDLVKKEVRPRQILTRTSMLNAFALDLAMGGSTNTILHTLAIASEAELDFDFSELNDLSAKTPYICKVSPATTEVHIEDVDRAGGISAILKELSKVEGLLDLSAPTVTGKTLGENIASAEVLDRTVIRSVEEPYSTTGGLAVLYGNLAPNGAVVKTGAVSPAMMKHTGPAKVYDCQDDAIAGIMNGDVKSGDVVVIRYEGPRGGPGMPEMLSPTSAIIGRGLGDSVALITDGRFSGGSRGACVGHVSPEAADRGPIAAVQTGDMITIDIPARSMTVALDDETIRQRIEALPKFEPKIKKGYLARYARMVTSANTGAVLKNDF.

Asp-80 provides a ligand contact to Mg(2+). Residue Cys-121 participates in [2Fe-2S] cluster binding. Positions 122 and 123 each coordinate Mg(2+). Lys-123 is subject to N6-carboxylysine. Residue Cys-194 coordinates [2Fe-2S] cluster. Glu-447 serves as a coordination point for Mg(2+). The active-site Proton acceptor is Ser-473.

It belongs to the IlvD/Edd family. As to quaternary structure, homodimer. It depends on [2Fe-2S] cluster as a cofactor. Mg(2+) is required as a cofactor.

The enzyme catalyses (2R)-2,3-dihydroxy-3-methylbutanoate = 3-methyl-2-oxobutanoate + H2O. It catalyses the reaction (2R,3R)-2,3-dihydroxy-3-methylpentanoate = (S)-3-methyl-2-oxopentanoate + H2O. It functions in the pathway amino-acid biosynthesis; L-isoleucine biosynthesis; L-isoleucine from 2-oxobutanoate: step 3/4. The protein operates within amino-acid biosynthesis; L-valine biosynthesis; L-valine from pyruvate: step 3/4. Functionally, functions in the biosynthesis of branched-chain amino acids. Catalyzes the dehydration of (2R,3R)-2,3-dihydroxy-3-methylpentanoate (2,3-dihydroxy-3-methylvalerate) into 2-oxo-3-methylpentanoate (2-oxo-3-methylvalerate) and of (2R)-2,3-dihydroxy-3-methylbutanoate (2,3-dihydroxyisovalerate) into 2-oxo-3-methylbutanoate (2-oxoisovalerate), the penultimate precursor to L-isoleucine and L-valine, respectively. This is Dihydroxy-acid dehydratase from Chlorobaculum tepidum (strain ATCC 49652 / DSM 12025 / NBRC 103806 / TLS) (Chlorobium tepidum).